A 400-amino-acid polypeptide reads, in one-letter code: AA13 family lytic polysaccharide monooxygenase A (400 aa).

Positions 1-17 are cleaved as a signal peptide; that stretch reads MLLTVLAVVGCFTAVNG. Histidine 18 is a binding site for Cu(2+). Histidine 18 carries the methylhistidine modification. The Chitin-binding type-4 domain maps to 18-247; the sequence is HGYLTIPASR…AQVYLHCADI (230 aa). Intrachain disulfides connect cysteine 39/cysteine 42, cysteine 65/cysteine 244, cysteine 101/cysteine 202, cysteine 117/cysteine 144, cysteine 152/cysteine 160, cysteine 166/cysteine 172, and cysteine 180/cysteine 191. Position 108 (histidine 108) interacts with Cu(2+). Residue asparagine 119 is glycosylated (N-linked (GlcNAc...) asparagine). Tyrosine 241 serves as a coordination point for Cu(2+). The disordered stretch occupies residues 254 to 287; sequence GGTTSKSTTSTTSTTSTSRSTSTSAPTTTSSAST. Positions 257–287 are enriched in low complexity; that stretch reads TSKSTTSTTSTTSTSRSTSTSAPTTTSSAST. The CBM20 domain occupies 293-400; it reads TTQASLIPVT…TTATAAASWR (108 aa). A glycan (N-linked (GlcNAc...) asparagine) is linked at asparagine 379.

The protein belongs to the polysaccharide monooxygenase AA13 family. Cu(2+) is required as a cofactor. In terms of processing, O-mannosylated.

The protein resides in the secreted. The enzyme catalyses starch + reduced acceptor + O2 = D-glucono-1,5-lactone-terminated malto-oligosaccharides + short-chain malto-oligosaccharides + acceptor + H2O.. With respect to regulation, activity is inhibited by both beta-cyclodextrin or amylose that block the access to the active site. Functionally, starch-active lytic polysaccharide monooxygenase that oxidizes the C1 position of starch substrates. Catalysis by LPMOs requires the reduction of the active-site copper from Cu(II) to Cu(I) by a reducing agent and H(2)O(2) or O(2) as a cosubstrate. This is AA13 family lytic polysaccharide monooxygenase A from Aspergillus terreus (strain NIH 2624 / FGSC A1156).